Consider the following 294-residue polypeptide: Probable 2-(5''-triphosphoribosyl)-3'-dephosphocoenzyme-A synthase (294 aa).

This sequence belongs to the CitG/MdcB family.

The catalysed reaction is 3'-dephospho-CoA + ATP = 2'-(5''-triphospho-alpha-D-ribosyl)-3'-dephospho-CoA + adenine. In Streptococcus pyogenes serotype M3 (strain ATCC BAA-595 / MGAS315), this protein is Probable 2-(5''-triphosphoribosyl)-3'-dephosphocoenzyme-A synthase.